A 434-amino-acid chain; its full sequence is Enolase (434 aa).

His158 and Glu167 together coordinate substrate. Catalysis depends on Glu210, which acts as the Proton donor. 3 residues coordinate Mg(2+): Asp245, Glu294, and Asp319. Residues Glu294 and Asp319 each contribute to the substrate site. Lys344 (proton acceptor) is an active-site residue. Substrate-binding positions include 371 to 374 (SHRS) and Lys395.

Belongs to the enolase family. In terms of assembly, homodimer. Mg(2+) is required as a cofactor.

It localises to the cytoplasm. It catalyses the reaction (2R)-2-phosphoglycerate = phosphoenolpyruvate + H2O. Its pathway is carbohydrate degradation; glycolysis; pyruvate from D-glyceraldehyde 3-phosphate: step 4/5. The protein is Enolase (ENO) of Schistosoma mansoni (Blood fluke).